The sequence spans 155 residues: Ribosomal RNA large subunit methyltransferase H (155 aa).

S-adenosyl-L-methionine-binding positions include Leu72, Gly104, and 123–128; that span reads LAKITL.

Belongs to the RNA methyltransferase RlmH family. As to quaternary structure, homodimer.

Its subcellular location is the cytoplasm. The catalysed reaction is pseudouridine(1915) in 23S rRNA + S-adenosyl-L-methionine = N(3)-methylpseudouridine(1915) in 23S rRNA + S-adenosyl-L-homocysteine + H(+). In terms of biological role, specifically methylates the pseudouridine at position 1915 (m3Psi1915) in 23S rRNA. In Mycoplasma capricolum subsp. capricolum (strain California kid / ATCC 27343 / NCTC 10154), this protein is Ribosomal RNA large subunit methyltransferase H.